The chain runs to 93 residues: MAPSARNRKPGARSMAKAAALRKPKKKVNPLDKDGITYIDYKDTALLRKFISDRGKIRARRVTGVTSQQQRQIARAVKNAREMALLPYTATAR.

Positions 1–11 (MAPSARNRKPG) are enriched in basic residues. A disordered region spans residues 1–27 (MAPSARNRKPGARSMAKAAALRKPKKK).

This sequence belongs to the bacterial ribosomal protein bS18 family. As to quaternary structure, part of the 30S ribosomal subunit. Forms a tight heterodimer with protein bS6.

Functionally, binds as a heterodimer with protein bS6 to the central domain of the 16S rRNA, where it helps stabilize the platform of the 30S subunit. The protein is Small ribosomal subunit protein bS18 of Salinispora tropica (strain ATCC BAA-916 / DSM 44818 / JCM 13857 / NBRC 105044 / CNB-440).